Reading from the N-terminus, the 81-residue chain is Cytochrome b559 subunit alpha (81 aa).

The chain crosses the membrane as a helical span at residues 21–35 (VIHALTIPALFLAGW). His23 contacts heme.

This sequence belongs to the PsbE/PsbF family. Heterodimer of an alpha subunit and a beta subunit. PSII is composed of 1 copy each of membrane proteins PsbA, PsbB, PsbC, PsbD, PsbE, PsbF, PsbH, PsbI, PsbJ, PsbK, PsbL, PsbM, PsbT, PsbX, PsbY, PsbZ, Psb30/Ycf12, peripheral proteins PsbO, CyanoQ (PsbQ), PsbU, PsbV and a large number of cofactors. It forms dimeric complexes. It depends on heme b as a cofactor.

It localises to the cellular thylakoid membrane. Functionally, this b-type cytochrome is tightly associated with the reaction center of photosystem II (PSII). PSII is a light-driven water:plastoquinone oxidoreductase that uses light energy to abstract electrons from H(2)O, generating O(2) and a proton gradient subsequently used for ATP formation. It consists of a core antenna complex that captures photons, and an electron transfer chain that converts photonic excitation into a charge separation. The chain is Cytochrome b559 subunit alpha from Synechococcus sp. (strain JA-3-3Ab) (Cyanobacteria bacterium Yellowstone A-Prime).